The sequence spans 408 residues: 1-deoxy-D-xylulose 5-phosphate reductoisomerase (408 aa).

7 residues coordinate NADPH: T19, G20, S21, I22, G45, N47, and N130. 1-deoxy-D-xylulose 5-phosphate is bound at residue K131. An NADPH-binding site is contributed by E132. Position 156 (D156) interacts with Mn(2+). 4 residues coordinate 1-deoxy-D-xylulose 5-phosphate: S157, E158, S182, and H205. E158 lines the Mn(2+) pocket. An NADPH-binding site is contributed by G211. 1-deoxy-D-xylulose 5-phosphate contacts are provided by S218, N223, K224, and E227. E227 provides a ligand contact to Mn(2+).

The protein belongs to the DXR family. It depends on Mg(2+) as a cofactor. Mn(2+) is required as a cofactor.

The catalysed reaction is 2-C-methyl-D-erythritol 4-phosphate + NADP(+) = 1-deoxy-D-xylulose 5-phosphate + NADPH + H(+). The protein operates within isoprenoid biosynthesis; isopentenyl diphosphate biosynthesis via DXP pathway; isopentenyl diphosphate from 1-deoxy-D-xylulose 5-phosphate: step 1/6. Catalyzes the NADPH-dependent rearrangement and reduction of 1-deoxy-D-xylulose-5-phosphate (DXP) to 2-C-methyl-D-erythritol 4-phosphate (MEP). This Gluconobacter oxydans (strain 621H) (Gluconobacter suboxydans) protein is 1-deoxy-D-xylulose 5-phosphate reductoisomerase.